The primary structure comprises 488 residues: Glutamyl-tRNA(Gln) amidotransferase subunit A (488 aa).

Active-site charge relay system residues include Lys-78 and Ser-153. Catalysis depends on Ser-177, which acts as the Acyl-ester intermediate.

It belongs to the amidase family. GatA subfamily. Heterotrimer of A, B and C subunits.

The catalysed reaction is L-glutamyl-tRNA(Gln) + L-glutamine + ATP + H2O = L-glutaminyl-tRNA(Gln) + L-glutamate + ADP + phosphate + H(+). Functionally, allows the formation of correctly charged Gln-tRNA(Gln) through the transamidation of misacylated Glu-tRNA(Gln) in organisms which lack glutaminyl-tRNA synthetase. The reaction takes place in the presence of glutamine and ATP through an activated gamma-phospho-Glu-tRNA(Gln). This chain is Glutamyl-tRNA(Gln) amidotransferase subunit A, found in Thermoanaerobacter pseudethanolicus (strain ATCC 33223 / 39E) (Clostridium thermohydrosulfuricum).